Consider the following 172-residue polypeptide: Protein-export protein SecB (172 aa).

Belongs to the SecB family. In terms of assembly, homotetramer, a dimer of dimers. One homotetramer interacts with 1 SecA dimer.

It is found in the cytoplasm. Its function is as follows. One of the proteins required for the normal export of preproteins out of the cell cytoplasm. It is a molecular chaperone that binds to a subset of precursor proteins, maintaining them in a translocation-competent state. It also specifically binds to its receptor SecA. This chain is Protein-export protein SecB, found in Ralstonia pickettii (strain 12J).